A 544-amino-acid polypeptide reads, in one-letter code: CTP synthase (544 aa).

The segment at 1-266 is amidoligase domain; that stretch reads MTRFVFITGG…DREVLRHFNL (266 aa). Serine 13 is a CTP binding site. Serine 13 provides a ligand contact to UTP. 14–19 is an ATP binding site; it reads SLGKGI. Tyrosine 54 lines the L-glutamine pocket. Aspartate 71 is a binding site for ATP. Positions 71 and 140 each coordinate Mg(2+). Residues 147-149, 187-192, and lysine 223 each bind CTP; these read DIE and KTKPTQ. UTP is bound by residues 187-192 and lysine 223; that span reads KTKPTQ. The region spanning 292-543 is the Glutamine amidotransferase type-1 domain; the sequence is KIAIVGKYIT…VAAAVRQARL (252 aa). Glycine 354 is an L-glutamine binding site. The Nucleophile; for glutamine hydrolysis role is filled by cysteine 381. L-glutamine is bound by residues 382–385, glutamate 405, and arginine 471; that span reads FGMQ. Active-site residues include histidine 516 and glutamate 518.

It belongs to the CTP synthase family. Homotetramer.

It catalyses the reaction UTP + L-glutamine + ATP + H2O = CTP + L-glutamate + ADP + phosphate + 2 H(+). It carries out the reaction L-glutamine + H2O = L-glutamate + NH4(+). The enzyme catalyses UTP + NH4(+) + ATP = CTP + ADP + phosphate + 2 H(+). It functions in the pathway pyrimidine metabolism; CTP biosynthesis via de novo pathway; CTP from UDP: step 2/2. Its activity is regulated as follows. Allosterically activated by GTP, when glutamine is the substrate; GTP has no effect on the reaction when ammonia is the substrate. The allosteric effector GTP functions by stabilizing the protein conformation that binds the tetrahedral intermediate(s) formed during glutamine hydrolysis. Inhibited by the product CTP, via allosteric rather than competitive inhibition. Its function is as follows. Catalyzes the ATP-dependent amination of UTP to CTP with either L-glutamine or ammonia as the source of nitrogen. Regulates intracellular CTP levels through interactions with the four ribonucleotide triphosphates. This Granulibacter bethesdensis (strain ATCC BAA-1260 / CGDNIH1) protein is CTP synthase.